Consider the following 237-residue polypeptide: MAGHNKWSKVKHIKAKEDAKKGKVFTKAVRDIMTAVRDGGPNPDTNAALRLAIERAKAVSMPQDNIKRAIDKASGNLPGVKYEEITYEGYGPGGVAIMVECLTDNKNRTVASVRHAFSKSGGSLGTSGSVSWMFEKKGVITVERDENEDAIMEAALESGANDILEFDEVLVIETDPADFNQVLEAVEKAGAKILESSVGLVATNEIDVDDATAEKVERLIDMLEENDDVQNVYHNMK.

The protein belongs to the TACO1 family.

The protein localises to the cytoplasm. In Nitratiruptor sp. (strain SB155-2), this protein is Probable transcriptional regulatory protein NIS_0560.